The chain runs to 250 residues: NH(3)-dependent NAD(+) synthetase (250 aa).

30–37 (GVSGGIDS) is a binding site for ATP. Residue D36 participates in Mg(2+) binding. R117 serves as a coordination point for deamido-NAD(+). Residue T137 coordinates ATP. Residue E142 participates in Mg(2+) binding. Deamido-NAD(+)-binding residues include K150 and D157. The ATP site is built by K166 and S188. 234 to 235 (HK) contributes to the deamido-NAD(+) binding site.

The protein belongs to the NAD synthetase family. In terms of assembly, homodimer.

It catalyses the reaction deamido-NAD(+) + NH4(+) + ATP = AMP + diphosphate + NAD(+) + H(+). It functions in the pathway cofactor biosynthesis; NAD(+) biosynthesis; NAD(+) from deamido-NAD(+) (ammonia route): step 1/1. Its function is as follows. Catalyzes the ATP-dependent amidation of deamido-NAD to form NAD. Uses ammonia as a nitrogen source. This Mannheimia succiniciproducens (strain KCTC 0769BP / MBEL55E) protein is NH(3)-dependent NAD(+) synthetase.